A 362-amino-acid chain; its full sequence is Chorismate synthase (362 aa).

Position 46 (Arg-46) interacts with NADP(+). Residues 121-123 (RAS), 237-238 (NA), Gly-277, 292-296 (KPTPS), and Arg-318 contribute to the FMN site.

It belongs to the chorismate synthase family. Homotetramer. The cofactor is FMNH2.

It carries out the reaction 5-O-(1-carboxyvinyl)-3-phosphoshikimate = chorismate + phosphate. The protein operates within metabolic intermediate biosynthesis; chorismate biosynthesis; chorismate from D-erythrose 4-phosphate and phosphoenolpyruvate: step 7/7. Functionally, catalyzes the anti-1,4-elimination of the C-3 phosphate and the C-6 proR hydrogen from 5-enolpyruvylshikimate-3-phosphate (EPSP) to yield chorismate, which is the branch point compound that serves as the starting substrate for the three terminal pathways of aromatic amino acid biosynthesis. This reaction introduces a second double bond into the aromatic ring system. The polypeptide is Chorismate synthase (Campylobacter lari (strain RM2100 / D67 / ATCC BAA-1060)).